The sequence spans 443 residues: tRNA modification GTPase MnmE (443 aa).

The (6S)-5-formyl-5,6,7,8-tetrahydrofolate site is built by Arg23, Glu82, and Lys121. Residues 215-364 (GTSIVLAGHP…LKQFIQKWIQ (150 aa)) form the TrmE-type G domain. Asn225 is a K(+) binding site. Residues 225-230 (NAGKSS), 244-250 (TDIPGTT), and 269-272 (DSAG) contribute to the GTP site. Ser229 is a binding site for Mg(2+). K(+) is bound by residues Thr244, Ile246, and Thr249. Residue Thr250 participates in Mg(2+) binding. Position 443 (Lys443) interacts with (6S)-5-formyl-5,6,7,8-tetrahydrofolate.

Belongs to the TRAFAC class TrmE-Era-EngA-EngB-Septin-like GTPase superfamily. TrmE GTPase family. Homodimer. Heterotetramer of two MnmE and two MnmG subunits. K(+) serves as cofactor.

Its subcellular location is the cytoplasm. Exhibits a very high intrinsic GTPase hydrolysis rate. Involved in the addition of a carboxymethylaminomethyl (cmnm) group at the wobble position (U34) of certain tRNAs, forming tRNA-cmnm(5)s(2)U34. This is tRNA modification GTPase MnmE from Chlamydia felis (strain Fe/C-56) (Chlamydophila felis).